Reading from the N-terminus, the 184-residue chain is ATP-dependent protease subunit HslV (184 aa).

The active site involves Thr-12. 3 residues coordinate Na(+): Gly-167, Cys-170, and Thr-173.

This sequence belongs to the peptidase T1B family. HslV subfamily. In terms of assembly, a double ring-shaped homohexamer of HslV is capped on each side by a ring-shaped HslU homohexamer. The assembly of the HslU/HslV complex is dependent on binding of ATP.

The protein localises to the cytoplasm. The catalysed reaction is ATP-dependent cleavage of peptide bonds with broad specificity.. Its activity is regulated as follows. Allosterically activated by HslU binding. Its function is as follows. Protease subunit of a proteasome-like degradation complex believed to be a general protein degrading machinery. In Wolbachia sp. subsp. Drosophila simulans (strain wRi), this protein is ATP-dependent protease subunit HslV.